The sequence spans 189 residues: Large ribosomal subunit protein bL17 (189 aa).

Residues 126-189 (DRARRVKASQ…DADADEAPQN (64 aa)) are disordered. Residues 139–180 (QDAPSEPQAAEEPAAEEAVAATEAVAAPADAEATDAEAGSAD) are compositionally biased toward low complexity.

The protein belongs to the bacterial ribosomal protein bL17 family. As to quaternary structure, part of the 50S ribosomal subunit. Contacts protein L32.

This is Large ribosomal subunit protein bL17 from Mycobacterium marinum (strain ATCC BAA-535 / M).